Consider the following 164-residue polypeptide: SsrA-binding protein (164 aa).

Belongs to the SmpB family.

It is found in the cytoplasm. Functionally, required for rescue of stalled ribosomes mediated by trans-translation. Binds to transfer-messenger RNA (tmRNA), required for stable association of tmRNA with ribosomes. tmRNA and SmpB together mimic tRNA shape, replacing the anticodon stem-loop with SmpB. tmRNA is encoded by the ssrA gene; the 2 termini fold to resemble tRNA(Ala) and it encodes a 'tag peptide', a short internal open reading frame. During trans-translation Ala-aminoacylated tmRNA acts like a tRNA, entering the A-site of stalled ribosomes, displacing the stalled mRNA. The ribosome then switches to translate the ORF on the tmRNA; the nascent peptide is terminated with the 'tag peptide' encoded by the tmRNA and targeted for degradation. The ribosome is freed to recommence translation, which seems to be the essential function of trans-translation. In Corynebacterium efficiens (strain DSM 44549 / YS-314 / AJ 12310 / JCM 11189 / NBRC 100395), this protein is SsrA-binding protein.